The primary structure comprises 115 residues: Large ribosomal subunit protein bL20 (115 aa).

This sequence belongs to the bacterial ribosomal protein bL20 family.

Functionally, binds directly to 23S ribosomal RNA and is necessary for the in vitro assembly process of the 50S ribosomal subunit. It is not involved in the protein synthesizing functions of that subunit. The protein is Large ribosomal subunit protein bL20 of Chlorobaculum tepidum (strain ATCC 49652 / DSM 12025 / NBRC 103806 / TLS) (Chlorobium tepidum).